A 691-amino-acid polypeptide reads, in one-letter code: NADPH--cytochrome P450 reductase (691 aa).

At 2–7 (PFGIDN) the chain is on the lumenal side. Residues 8-24 (TDFTVLAGLVLAVLLYV) form a helical membrane-spanning segment. At 25-691 (KRNSIKELLM…TSGRYQEDVW (667 aa)) the chain is on the cytoplasmic side. The Flavodoxin-like domain maps to 61–204 (YLVLYASQTG…DYMAWKDSIL (144 aa)). Residues 67–72 (SQTGTA), Lys78, 116–119 (STYG), 152–161 (LGNSTYEFFN), and Asp187 contribute to the FMN site. The FAD-binding FR-type domain occupies 266–529 (SQPYIAPIVK…HVRRSNFRLP (264 aa)). Residue Arg285 participates in NADP(+) binding. FAD contacts are provided by residues 439 to 442 (RYYS), 457 to 459 (TSI), and 476 to 479 (GVTT). NADP(+)-binding positions include Thr543, 610–611 (SR), 617–621 (KVYVQ), and Asp646. Lys666 participates in a covalent cross-link: Glycyl lysine isopeptide (Lys-Gly) (interchain with G-Cter in ubiquitin). An FAD-binding site is contributed by Trp691.

It belongs to the NADPH--cytochrome P450 reductase family. In the N-terminal section; belongs to the flavodoxin family. This sequence in the C-terminal section; belongs to the flavoprotein pyridine nucleotide cytochrome reductase family. Interacts with PCL1. It depends on FAD as a cofactor. FMN serves as cofactor. In terms of processing, phosphorylated by the cyclin-CDK PCL1-PHO85.

Its subcellular location is the endoplasmic reticulum membrane. It is found in the mitochondrion outer membrane. The protein localises to the cell membrane. It carries out the reaction 2 oxidized [cytochrome P450] + NADPH = 2 reduced [cytochrome P450] + NADP(+) + H(+). Its function is as follows. This enzyme is required for electron transfer from NADP to cytochrome P450 in microsomes. It can also provide electron transfer to heme oxygenase and cytochrome B5. Involved in ergosterol biosynthesis. Has NADPH-dependent ferrireductase activity on the plasma membrane. The sequence is that of NADPH--cytochrome P450 reductase from Saccharomyces cerevisiae (strain ATCC 204508 / S288c) (Baker's yeast).